The sequence spans 515 residues: Alpha-1B adrenergic receptor (515 aa).

Over 1–45 (MNPDLDTGHNTSAPAHWGELKDDNFTGPNQTSSNSTLPQLDVTRA) the chain is Extracellular. Residues Asn-10, Asn-24, and Asn-34 are each glycosylated (N-linked (GlcNAc...) asparagine). Residues 46–70 (ISVGLVLGAFILFAIVGNILVILSV) traverse the membrane as a helical segment. The Cytoplasmic segment spans residues 71–83 (ACNRHLRTPTNYF). The helical transmembrane segment at 84-105 (IVNLAIADLLLSFTVLPFSATL) threads the bilayer. Residues 106–115 (EVLGYWVLGR) are Extracellular-facing. Residues 116 to 141 (IFCDIWAAVDVLCCTASILSLCAISI) traverse the membrane as a helical segment. A disulfide bond links Cys-118 and Cys-195. At 142–161 (DRYIGVRYSLQYPTLVTRRK) the chain is on the cytoplasmic side. Residues 162–182 (AILALLSVWVLSTVISIGPLL) form a helical membrane-spanning segment. Over 183–201 (GWKEPAPNDDKECGVTEEP) the chain is Extracellular. The helical transmembrane segment at 202-224 (FYALFSSLGSFYIPLAVILVMYC) threads the bilayer. At 225–295 (RVYIVAKRTT…FSREKKAAKT (71 aa)) the chain is on the cytoplasmic side. Residue Thr-264 is modified to Phosphothreonine. A helical transmembrane segment spans residues 296 to 319 (LGIVVGMFILCWLPFFIALPLGSL). Residues 320 to 326 (FSTLKPP) are Extracellular-facing. Residues 327 to 351 (DAVFKVVFWLGYFNSCLNPIIYPCS) form a helical membrane-spanning segment. The Cytoplasmic portion of the chain corresponds to 352 to 515 (SKEFKRAFMR…SNMPLAPGHF (164 aa)). Cys-365 is lipidated: S-palmitoyl cysteine. Residues 368–378 (RGGRRRRRRRR) carry the Nuclear localization signal motif. 2 disordered regions span residues 392–430 (GGSL…GYLG) and 474–515 (LGDP…PGHF). Composition is skewed to polar residues over residues 410–424 (SCMS…SASP) and 484–498 (GDTS…TDLA).

This sequence belongs to the G-protein coupled receptor 1 family. Adrenergic receptor subfamily. ADRA1B sub-subfamily. As to quaternary structure, homo- and heterooligomer. Heterooligomerizes with ADRA1B homooligomers in cardiac myocytes. Interacts with CAVIN4.

It localises to the nucleus membrane. The protein resides in the cell membrane. It is found in the cytoplasm. Its subcellular location is the membrane. The protein localises to the caveola. This alpha-adrenergic receptor mediates its action by association with G proteins that activate a phosphatidylinositol-calcium second messenger system. Its effect is mediated by G(q) and G(11) proteins. Nuclear ADRA1A-ADRA1B heterooligomers regulate phenylephrine (PE)-stimulated ERK signaling in cardiac myocytes. In Rattus norvegicus (Rat), this protein is Alpha-1B adrenergic receptor (Adra1b).